The chain runs to 89 residues: Defensin-like protein 78 (89 aa).

The signal sequence occupies residues 1 to 30 (MANNMVASPYKNTFMMIALVLILLISGSEA). Cystine bridges form between C40/C75, C44/C67, C52/C73, and C56/C74.

The protein belongs to the DEFL family.

It localises to the secreted. The chain is Defensin-like protein 78 from Arabidopsis thaliana (Mouse-ear cress).